A 227-amino-acid polypeptide reads, in one-letter code: Cytidylate kinase (227 aa).

Position 12–20 (Gly12–Thr20) interacts with ATP.

This sequence belongs to the cytidylate kinase family. Type 1 subfamily.

It localises to the cytoplasm. The enzyme catalyses CMP + ATP = CDP + ADP. It carries out the reaction dCMP + ATP = dCDP + ADP. This Enterobacter sp. (strain 638) protein is Cytidylate kinase.